The primary structure comprises 1181 residues: DNA-directed RNA polymerase subunit beta' (1181 aa).

Zn(2+)-binding residues include Cys68, Cys70, Cys83, and Cys86. Mg(2+) contacts are provided by Asp457, Asp459, and Asp461. Residues Cys802, Cys876, Cys883, and Cys886 each coordinate Zn(2+).

It belongs to the RNA polymerase beta' chain family. The RNAP catalytic core consists of 2 alpha, 1 beta, 1 beta' and 1 omega subunit. When a sigma factor is associated with the core the holoenzyme is formed, which can initiate transcription. Mg(2+) is required as a cofactor. The cofactor is Zn(2+).

It carries out the reaction RNA(n) + a ribonucleoside 5'-triphosphate = RNA(n+1) + diphosphate. Its function is as follows. DNA-dependent RNA polymerase catalyzes the transcription of DNA into RNA using the four ribonucleoside triphosphates as substrates. In Syntrophomonas wolfei subsp. wolfei (strain DSM 2245B / Goettingen), this protein is DNA-directed RNA polymerase subunit beta'.